Consider the following 822-residue polypeptide: AP-1 complex subunit gamma-1 (822 aa).

Residues 593–604 (NGPSEIVQTNGE) are compositionally biased toward polar residues. Positions 593 to 627 (NGPSEIVQTNGETEPAPLETKPPPSGPQPTSQAND) are disordered. The GAE domain occupies 702–817 (PGIPSITAYS…QDLAEVNNFP (116 aa)).

Belongs to the adaptor complexes large subunit family. In terms of assembly, adaptor protein complex 1 (AP-1) is a heterotetramer composed of two large adaptins (gamma-type subunit AP1G1 and beta-type subunit AP1B1), a medium adaptin (mu-type subunit AP1M1 or AP1M2) and a small adaptin (sigma-type subunit AP1S1 or AP1S2 or AP1S3). Interacts (via GAE domain) with RABEP1. Interacts with EPS15. Interacts with SYNRG/gamma-synergin. Interacts (via GAE domain) with AP1AR (via coiled-coil domain). Interacts with CLN3 (via dileucine motif); this interaction facilitates lysosomal targeting. Interacts (via GAE domain) with AFTPH/aftiphilin; the interaction is required to recruit AFTPH/aftiphilin to the perinuclear region of the cell. In terms of tissue distribution, widely expressed.

Its subcellular location is the golgi apparatus. The protein resides in the cytoplasmic vesicle. It is found in the clathrin-coated vesicle membrane. It localises to the cytoplasm. The protein localises to the perinuclear region. Its subcellular location is the clathrin-coated vesicle. The protein resides in the membrane. It is found in the clathrin-coated pit. In terms of biological role, subunit of clathrin-associated adaptor protein complex 1 that plays a role in protein sorting in the late-Golgi/trans-Golgi network (TGN) and/or endosomes. The AP complexes mediate both the recruitment of clathrin to membranes and the recognition of sorting signals within the cytosolic tails of transmembrane cargo molecules. In association with AFTPH/aftiphilin in the aftiphilin/p200/gamma-synergin complex, involved in the trafficking of transferrin from early to recycling endosomes, and the membrane trafficking of furin and the lysosomal enzyme cathepsin D between the trans-Golgi network (TGN) and endosomes. This chain is AP-1 complex subunit gamma-1 (Ap1g1), found in Mus musculus (Mouse).